The sequence spans 97 residues: Gene 45 protein (97 aa).

The protein is Gene 45 protein (45) of Mycobacterium (Mycobacteriophage L5).